Reading from the N-terminus, the 299-residue chain is Probable lipid kinase YegS (299 aa).

The region spanning 2–133 (AEFPASLLIL…IDMAQVNKQT (132 aa)) is the DAGKc domain. Residues threonine 40, 66-72 (GDGTINE), and threonine 95 contribute to the ATP site. Positions 215, 218, and 220 each coordinate Mg(2+). The active-site Proton acceptor is the glutamate 271.

The protein belongs to the diacylglycerol/lipid kinase family. YegS lipid kinase subfamily. The cofactor is Mg(2+). It depends on Ca(2+) as a cofactor.

It localises to the cytoplasm. Its function is as follows. Probably phosphorylates lipids; the in vivo substrate is unknown. This Escherichia coli O127:H6 (strain E2348/69 / EPEC) protein is Probable lipid kinase YegS.